The chain runs to 264 residues: Acyl-[acyl-carrier-protein]--UDP-N-acetylglucosamine O-acyltransferase (264 aa).

Belongs to the transferase hexapeptide repeat family. LpxA subfamily. In terms of assembly, homotrimer.

The protein resides in the cytoplasm. The catalysed reaction is a (3R)-hydroxyacyl-[ACP] + UDP-N-acetyl-alpha-D-glucosamine = a UDP-3-O-[(3R)-3-hydroxyacyl]-N-acetyl-alpha-D-glucosamine + holo-[ACP]. It participates in glycolipid biosynthesis; lipid IV(A) biosynthesis; lipid IV(A) from (3R)-3-hydroxytetradecanoyl-[acyl-carrier-protein] and UDP-N-acetyl-alpha-D-glucosamine: step 1/6. In terms of biological role, involved in the biosynthesis of lipid A, a phosphorylated glycolipid that anchors the lipopolysaccharide to the outer membrane of the cell. The sequence is that of Acyl-[acyl-carrier-protein]--UDP-N-acetylglucosamine O-acyltransferase from Rickettsia rickettsii.